We begin with the raw amino-acid sequence, 744 residues long: Catalase A (744 aa).

Active-site residues include His93 and Asn166. Tyr380 serves as a coordination point for heme.

Belongs to the catalase family. The cofactor is heme.

Its subcellular location is the peroxisome matrix. It carries out the reaction 2 H2O2 = O2 + 2 H2O. Its function is as follows. Catalyzes the degradation of hydrogen peroxide (H(2)O(2)) generated by peroxisomal oxidases to water and oxygen, thereby protecting cells from the toxic effects of hydrogen peroxide. This chain is Catalase A (catA), found in Emericella nidulans (strain FGSC A4 / ATCC 38163 / CBS 112.46 / NRRL 194 / M139) (Aspergillus nidulans).